Here is a 342-residue protein sequence, read N- to C-terminus: tRNA-specific 2-thiouridylase MnmA (342 aa).

Residues 6–13 (LLSGGVDS) and L32 each bind ATP. C92 serves as the catalytic Nucleophile. Cysteines 92 and 191 form a disulfide. An ATP-binding site is contributed by G116. The segment at 138 to 140 (KDQ) is interaction with tRNA. C191 serves as the catalytic Cysteine persulfide intermediate. Residues 293 to 294 (RY) form an interaction with tRNA region.

This sequence belongs to the MnmA/TRMU family.

It localises to the cytoplasm. It catalyses the reaction S-sulfanyl-L-cysteinyl-[protein] + uridine(34) in tRNA + AH2 + ATP = 2-thiouridine(34) in tRNA + L-cysteinyl-[protein] + A + AMP + diphosphate + H(+). In terms of biological role, catalyzes the 2-thiolation of uridine at the wobble position (U34) of tRNA, leading to the formation of s(2)U34. The polypeptide is tRNA-specific 2-thiouridylase MnmA (Helicobacter pylori (strain ATCC 700392 / 26695) (Campylobacter pylori)).